The following is a 195-amino-acid chain: Small ribosomal subunit protein bS16 (195 aa).

The segment covering 171-181 (PEAPVAAAEPA) has biased composition (low complexity). Residues 171–195 (PEAPVAAAEPAPEVKAEEKEEGGEA) are disordered.

The protein belongs to the bacterial ribosomal protein bS16 family.

The polypeptide is Small ribosomal subunit protein bS16 (Chlorobium luteolum (strain DSM 273 / BCRC 81028 / 2530) (Pelodictyon luteolum)).